The primary structure comprises 690 residues: F-box/LRR-repeat protein 5 (690 aa).

Positions 1–159 are hemerythrin-like; the sequence is MAPFPDEVDV…IKKKVIAQHC (159 aa). 7 residues coordinate Fe(3+): H15, H57, E58, E61, H80, H126, and E130. The region spanning 202-248 is the F-box domain; it reads STGITHLPPEVMLSIFSYLNPQELCRCSQVSTKWSQLAKTGSLWKHL. LRR repeat units follow at residues 340–364, 365–392, 393–418, 478–507, 575–606, 607–634, and 635–660; these read SSAV…LDLT, QTDI…DLSG, CEKI…QSGF, VWML…CVME, TTLP…SLSG, CYQI…NLSG, and CLTV…YFYY. 4 residues coordinate [2Fe-2S] cluster: C661, C675, C685, and C686.

Part of a SCF (SKP1-cullin-F-box) protein ligase complex. Interacts with ACO1/IRP1, IREB2/IRP2; the interaction depends on the [2Fe-2S] cluster. Interacts with DCTN1/p150-glued. Requires [2Fe-2S] cluster as cofactor. In terms of processing, polybiquitinated upon iron and oxygen depletion, leading to its degradation by the proteasome. Ubiquitination is regulated by the hemerythrin-like region that acts as an oxygen and iron sensor. Undergoes constitutive ubiquitin-dependent degradation at the steady state by HERC2. Ubiquitously expressed. Highly expressed in early embryogenesis with expression decreasing as the embryo progresses through development (E11 and E15).

It is found in the cytoplasm. It localises to the perinuclear region. The protein resides in the nucleus. It participates in protein modification; protein ubiquitination. Its activity is regulated as follows. An iron-sulfur cluster promotes IRP2 polyubiquitination and degradation in response to both iron and oxygen concentrations. Functionally, component of some SCF (SKP1-cullin-F-box) protein ligase complex that plays a central role in iron homeostasis by promoting the ubiquitination and subsequent degradation of IREB2/IRP2. The C-terminal domain of FBXL5 contains a redox-sensitive [2Fe-2S] cluster that, upon oxidation, promotes binding to IRP2 to effect its oxygen-dependent degradation. Under iron deficiency conditions, the N-terminal hemerythrin-like (Hr) region, which contains a diiron metal center, cannot bind iron and undergoes conformational changes that destabilize the FBXL5 protein and cause its ubiquitination and degradation. When intracellular iron levels start rising, the Hr region is stabilized. Additional increases in iron levels facilitate the assembly and incorporation of a redox active [2Fe-2S] cluster in the C-terminal domain. Only when oxygen level is high enough to maintain the cluster in its oxidized state can FBXL5 recruit IRP2 as a substrate for polyubiquination and degradation. Promotes ubiquitination and subsequent degradation of the dynactin complex component DCTN1. Within the nucleus, promotes the ubiquitination of SNAI1; preventing its interaction with DNA and promoting its degradation. Negatively regulates DNA damage response by mediating the ubiquitin-proteasome degradation of the DNA repair protein NABP2. In Mus musculus (Mouse), this protein is F-box/LRR-repeat protein 5 (Fbxl5).